The chain runs to 333 residues: Chemokine XC receptor 1 (333 aa).

Over 1 to 31 the chain is Extracellular; sequence MESSGNPESTTFFYYDLQSQPCENQAWVFAT. The helical transmembrane segment at 32 to 59 threads the bilayer; the sequence is LATTVLYCLVFLLSLVGNSLVLWVLVKY. Topologically, residues 60–69 are cytoplasmic; it reads ESLESLTNIF. The helical transmembrane segment at 70–89 threads the bilayer; sequence ILNLCLSDLVFACLLPVWIS. Residues 90 to 103 are Extracellular-facing; the sequence is PYHWGWVLGDFLCK. Cysteines 102 and 175 form a disulfide. The chain crosses the membrane as a helical span at residues 104 to 125; it reads LLNMIFSISLYSSIFFLTIMTI. Over 126–142 the chain is Cytoplasmic; that stretch reads HRYLSVVSPLSTLRVPT. Residues 143–167 form a helical membrane-spanning segment; sequence LRCRVLVTMAVWVASILSSILDTIF. The Extracellular segment spans residues 168-190; it reads HKVLSSGCDYSELTWYLTSVYQH. The chain crosses the membrane as a helical span at residues 191–209; that stretch reads NLFFLLSLGIILFCYVEIL. At 210 to 225 the chain is on the cytoplasmic side; sequence RTLFRSRSKRRHRTVK. Residues 226–250 traverse the membrane as a helical segment; sequence LIFAIVVAYFLSWGPYNFTLFLQTL. Over 251-267 the chain is Extracellular; sequence FRTQIIRSCEAKQQLEY. A helical membrane pass occupies residues 268–291; it reads ALLICRNLAFSHCCFNPVLYVFVG. Residues 292–333 lie on the Cytoplasmic side of the membrane; it reads VKFRTHLKHVLRQFWFCRLQAPSPASIPHSPGAFAYEGASFY.

Belongs to the G-protein coupled receptor 1 family.

It is found in the cell membrane. Functionally, receptor for chemokines SCYC1 and SCYC2. Subsequently transduces a signal by increasing the intracellular calcium ions level. Receptor for XCL1/Lymphotactin. The sequence is that of Chemokine XC receptor 1 (XCR1) from Homo sapiens (Human).